The chain runs to 336 residues: Probable G-protein coupled receptor 160 (336 aa).

Residues 1–20 (MTALSSKNCSLQYQLHQSPQ) are Extracellular-facing. The N-linked (GlcNAc...) asparagine glycan is linked to asparagine 8. Residues 21-41 (LLEASCLLFLIILGKVLLNIL) form a helical membrane-spanning segment. Residues 42–56 (LLRVRRGDARWTLME) are Cytoplasmic-facing. A helical transmembrane segment spans residues 57 to 77 (YFCFSLALVDLLLLVNISILT). The Extracellular portion of the chain corresponds to 78–95 (YFRDFVVLGIRFTRYHIC). The helical transmembrane segment at 96 to 116 (LLTQIISFTYGFLHYPVCSLA) threads the bilayer. At 117–136 (CIDYWCNLSRASKQSSRWQK) the chain is on the cytoplasmic side. The chain crosses the membrane as a helical span at residues 137 to 157 (LLYFLTVILTWISVLAYVLVD). At 158 to 186 (PAISVSLKAHRGYVYQCPAYVSTQSHWLS) the chain is on the extracellular side. A helical membrane pass occupies residues 187–207 (LSMLMVLFVAFLISWQEVVAL). Over 208-243 (LQAMRIASYKSKAALYFPFPLHCGYALSCREALLPR) the chain is Cytoplasmic. A helical membrane pass occupies residues 244-264 (LIVCFLGTWFPFVALQVLILS). Over 265-272 (LRVQIPAY) the chain is Extracellular. Residues 273-293 (IEMNVPWLYFVNSFLIAAVYW) form a helical membrane-spanning segment. Over 294-336 (FNCHKLDLRDSSLPVDPFINWKCCFVPVHRLKQVERPMSIVIC) the chain is Cytoplasmic.

This sequence belongs to the G-protein coupled receptor 1 family.

Its subcellular location is the cell membrane. Orphan receptor. In Mus musculus (Mouse), this protein is Probable G-protein coupled receptor 160 (Gpr160).